A 235-amino-acid chain; its full sequence is Glucosamine-6-phosphate deaminase (235 aa).

Asp-62 functions as the Proton acceptor; for enolization step in the catalytic mechanism. Residue Asn-128 is the For ring-opening step of the active site. The Proton acceptor; for ring-opening step role is filled by His-130. Residue Glu-135 is the For ring-opening step of the active site.

It belongs to the glucosamine/galactosamine-6-phosphate isomerase family. NagB subfamily.

It catalyses the reaction alpha-D-glucosamine 6-phosphate + H2O = beta-D-fructose 6-phosphate + NH4(+). It participates in amino-sugar metabolism; N-acetylneuraminate degradation; D-fructose 6-phosphate from N-acetylneuraminate: step 5/5. Functionally, catalyzes the reversible isomerization-deamination of glucosamine 6-phosphate (GlcN6P) to form fructose 6-phosphate (Fru6P) and ammonium ion. The protein is Glucosamine-6-phosphate deaminase of Streptococcus gordonii (strain Challis / ATCC 35105 / BCRC 15272 / CH1 / DL1 / V288).